We begin with the raw amino-acid sequence, 101 residues long: UPF0473 protein MGAS10750_Spy1887 (101 aa).

This sequence belongs to the UPF0473 family.

This chain is UPF0473 protein MGAS10750_Spy1887, found in Streptococcus pyogenes serotype M4 (strain MGAS10750).